Consider the following 519-residue polypeptide: Importin subunit alpha-9 (519 aa).

Residues 1 to 29 (MADDGSASNRRDPIKSSVGNVAGQRRRKQ) form a disordered region. ARM repeat units lie at residues 116–156 (FPPV…NIAA), 158–197 (KPEE…NVAG), 200–239 (EDLR…NLIK), 244–283 (KAAA…YLSA), 286–326 (DIAT…NFVA), 335–374 (ILIR…NIAA), 377–416 (IEHK…NLCV), and 429–468 (QEHL…LVLR).

The protein belongs to the importin alpha family. As to quaternary structure, forms a complex with importin subunit beta-1.

The protein resides in the nucleus envelope. Binds to conventional NLS motifs and mediates nuclear protein import across the nuclear envelope. Acts as a cellular receptor for the nuclear import of the virD2 protein of Agrobacterium, but is not essential for Agrobacterium-mediated root transformation. This Arabidopsis thaliana (Mouse-ear cress) protein is Importin subunit alpha-9.